A 198-amino-acid polypeptide reads, in one-letter code: Imidazoleglycerol-phosphate dehydratase (198 aa).

This sequence belongs to the imidazoleglycerol-phosphate dehydratase family.

It is found in the cytoplasm. It catalyses the reaction D-erythro-1-(imidazol-4-yl)glycerol 3-phosphate = 3-(imidazol-4-yl)-2-oxopropyl phosphate + H2O. Its pathway is amino-acid biosynthesis; L-histidine biosynthesis; L-histidine from 5-phospho-alpha-D-ribose 1-diphosphate: step 6/9. The sequence is that of Imidazoleglycerol-phosphate dehydratase from Herminiimonas arsenicoxydans.